We begin with the raw amino-acid sequence, 982 residues long: E3 ubiquitin-protein ligase CBL-B (982 aa).

Residues 35 to 167 (PPKQAAADRR…KAIFPNGQFQ (133 aa)) form a 4H region. Residues 35–343 (PPKQAAADRR…GRSYNPDLTG (309 aa)) form the Cbl-PTB domain. The segment at 168-240 (GDNFRITKAD…FEFDIFTRLF (73 aa)) is EF-hand-like. The Ca(2+) site is built by aspartate 221, threonine 223, asparagine 225, tyrosine 227, and glutamate 232. The SH2-like stretch occupies residues 241–343 (QPWGSILRNW…GRSYNPDLTG (103 aa)). Serine 282 is subject to Phosphoserine; by PKC/PRKCQ. Arginine 286 lines the 4-O-phospho-L-tyrosine pocket. The linker stretch occupies residues 344–372 (LCEPTPHDHIKVTQEQYELYCEMGSTFQL). A Phosphotyrosine modification is found at tyrosine 363. The segment at 373–412 (CKICAENDKDVKIEPCGHLMCTSCLTAWQESDGQGCPFCR) adopts an RING-type zinc-finger fold. A disordered region spans residues 465–588 (ASVRKCTDRQ…SVPSRDQPMP (124 aa)). Over residues 473 to 486 (RQNSPVTSPGSSPL) the composition is skewed to polar residues. Residues serine 476, serine 480, serine 484, serine 521, serine 525, and serine 529 each carry the phosphoserine modification. The interval 543–567 (PLPAPPPPLRDPPPPPERPPPIPPD) is interaction with VAV1. Residues 544–566 (LPAPPPPLRDPPPPPERPPPIPP) are compositionally biased toward pro residues. Serine 633 bears the Phosphoserine mark. Phosphotyrosine occurs at positions 664 and 708. 2 disordered regions span residues 702-723 (EDDD…SQPS) and 745-929 (THGA…EAAL). A compositionally biased stretch (polar residues) spans 714 to 723 (HPVSLNSQPS). Over residues 819–828 (PSLPPPPPPA) the composition is skewed to pro residues. Residues 838-848 (PPGSSSRPSSG) show a composition bias toward low complexity. Positions 884-899 (RASQDYDQLPSSSDGS) are enriched in polar residues. The residue at position 889 (tyrosine 889) is a Phosphotyrosine. An interaction with SH3KBP1 region spans residues 891-927 (QLPSSSDGSQAPARPPKPRPRRTAPEIHHRKPHGPEA). Basic residues predominate over residues 906–922 (PKPRPRRTAPEIHHRKP). In terms of domain architecture, UBA spans 931-970 (NVDAKIAKLMGEGYAFEEVKRALEIAQNNVEVARSILREF).

In terms of assembly, interacts with SH3 domain-containing proteins LCK, CRK and SORBS1. Interacts with LCP2 and ZAP70. Interacts with CBL. Interacts with SH3 domain-containing proteins VAV1, FYN, FGR, PLCG1, GRB2, CRKL, PIK3R1 and SH3KBP1/CIN85. Identified in heterotrimeric complexes with SH3KBP1/CIN85, CD2AP and ARHGEF7, where one CBLB peptide binds two copies of the other protein. Interacts with poly-ubiquitinated proteins. Dimerization is required for the binding of poly-ubiquitin, but not for the binding of mono-ubiquitin. Interacts with EGFR (phosphorylated). Interacts with IFT20. In terms of processing, phosphorylated on tyrosine and serine residues upon TCR or BCR activation. Phosphorylated on Tyr-664 and Tyr-708 in adipocytes following insulin stimulation. Auto-ubiquitinated upon EGF-mediated cell activation or upon T-cell costimulation by CD28; which promotes proteasomal degradation.

The protein resides in the cytoplasm. It carries out the reaction S-ubiquitinyl-[E2 ubiquitin-conjugating enzyme]-L-cysteine + [acceptor protein]-L-lysine = [E2 ubiquitin-conjugating enzyme]-L-cysteine + N(6)-ubiquitinyl-[acceptor protein]-L-lysine.. It participates in protein modification; protein ubiquitination. Its function is as follows. E3 ubiquitin-protein ligase which accepts ubiquitin from specific E2 ubiquitin-conjugating enzymes, and transfers it to substrates, generally promoting their degradation by the proteasome. Negatively regulates TCR (T-cell receptor), BCR (B-cell receptor) and FCER1 (high affinity immunoglobulin epsilon receptor) signal transduction pathways. In naive T-cells, inhibits VAV1 activation upon TCR engagement and imposes a requirement for CD28 costimulation for proliferation and IL-2 production. Also acts by promoting PIK3R1/p85 ubiquitination, which impairs its recruitment to the TCR and subsequent activation. In activated T-cells, inhibits PLCG1 activation and calcium mobilization upon restimulation and promotes anergy. In B-cells, acts by ubiquitinating SYK and promoting its proteasomal degradation. Slightly promotes SRC ubiquitination. May be involved in EGFR ubiquitination and internalization. May be functionally coupled with the E2 ubiquitin-protein ligase UB2D3. In association with CBL, required for proper feedback inhibition of ciliary platelet-derived growth factor receptor-alpha (PDGFRA) signaling pathway via ubiquitination and internalization of PDGFRA. This is E3 ubiquitin-protein ligase CBL-B (Cblb) from Mus musculus (Mouse).